A 616-amino-acid polypeptide reads, in one-letter code: Proline--tRNA ligase (616 aa).

Belongs to the class-II aminoacyl-tRNA synthetase family. ProS type 1 subfamily. Homodimer.

It localises to the cytoplasm. The catalysed reaction is tRNA(Pro) + L-proline + ATP = L-prolyl-tRNA(Pro) + AMP + diphosphate. Functionally, catalyzes the attachment of proline to tRNA(Pro) in a two-step reaction: proline is first activated by ATP to form Pro-AMP and then transferred to the acceptor end of tRNA(Pro). As ProRS can inadvertently accommodate and process non-cognate amino acids such as alanine and cysteine, to avoid such errors it has two additional distinct editing activities against alanine. One activity is designated as 'pretransfer' editing and involves the tRNA(Pro)-independent hydrolysis of activated Ala-AMP. The other activity is designated 'posttransfer' editing and involves deacylation of mischarged Ala-tRNA(Pro). The misacylated Cys-tRNA(Pro) is not edited by ProRS. This is Proline--tRNA ligase from Streptococcus mutans serotype c (strain ATCC 700610 / UA159).